The sequence spans 722 residues: Dual specificity tyrosine-phosphorylation-regulated kinase 2 (722 aa).

At Ser-25 the chain carries Phosphoserine. Residues 54 to 127 (TTTSLNGNGN…SGELKCNTPM (74 aa)) are disordered. Low complexity predominate over residues 66 to 119 (GNSNSNNNNNIGSPVSSSTTNSSNGGNERGSSTKSNSSSGSGSSGNSASSTGSG). The Protein kinase domain maps to 198-494 (YEILEVIGKG…PDEAAHHEFL (297 aa)). ATP-binding positions include 204–212 (IGKGSFGQV) and Lys-227. Asp-324 serves as the catalytic Proton acceptor. 2 positions are modified to phosphotyrosine; by autocatalysis: Tyr-356 and Tyr-358. 4 disordered regions span residues 494 to 519 (LQPSASSRHRSCRMSSSSSSSGLNSV), 557 to 582 (TTKSRQQPPSQSHGHAQSNGHLPDIK), 624 to 643 (GSGSTHHVSSAATRKHLPGT), and 679 to 722 (TTTH…FGRA). The segment covering 506–519 (RMSSSSSSSGLNSV) has biased composition (low complexity). Residues 557–576 (TTKSRQQPPSQSHGHAQSNG) show a composition bias toward polar residues. Low complexity-rich tracts occupy residues 626–635 (GSTHHVSSAA) and 689–707 (GQQQQQSSSGASTMAMSHS).

This sequence belongs to the protein kinase superfamily. CMGC Ser/Thr protein kinase family. MNB/DYRK subfamily. Requires Mg(2+) as cofactor. Phosphorylated on serine/threonine residues.

Its subcellular location is the cytoplasm. It carries out the reaction L-seryl-[protein] + ATP = O-phospho-L-seryl-[protein] + ADP + H(+). The enzyme catalyses L-threonyl-[protein] + ATP = O-phospho-L-threonyl-[protein] + ADP + H(+). It catalyses the reaction L-tyrosyl-[protein] + ATP = O-phospho-L-tyrosyl-[protein] + ADP + H(+). Its activity is regulated as follows. Autophosphorylates on Tyr-356 and Tyr-358. In vitro; can phosphorylate exogenous substrates on Ser and Thr residues. May have a physiological role in development being involved in cellular growth and differentiation. The protein is Dual specificity tyrosine-phosphorylation-regulated kinase 2 of Drosophila melanogaster (Fruit fly).